The following is a 129-amino-acid chain: uncharacterized protein (129 aa).

The protein belongs to the asfivirus C129R family.

The protein resides in the virion. Plays a role in the inhibition of type I interferon signaling pathway. Mechanistically, specifically interacts with 2',3'-cGAMP and cleaves it via its phosphodiesterase activity. In turn, prevents 2',3'-cGAMP interaction with host ER-resident STING1 leading to inhibition of downstream signaling pathway and type I interferon production. This is an uncharacterized protein from African swine fever virus (strain Badajoz 1971 Vero-adapted) (Ba71V).